Here is a 61-residue protein sequence, read N- to C-terminus: Large ribosomal subunit protein bL28 (61 aa).

It belongs to the bacterial ribosomal protein bL28 family.

The chain is Large ribosomal subunit protein bL28 from Nautilia profundicola (strain ATCC BAA-1463 / DSM 18972 / AmH).